The following is a 297-amino-acid chain: tRNA dimethylallyltransferase (297 aa).

15 to 22 contributes to the ATP binding site; it reads GPTASGKS. 17-22 contacts substrate; the sequence is TASGKS. Interaction with substrate tRNA regions lie at residues 40–43 and 164–168; these read DSMQ and QRIVR.

Belongs to the IPP transferase family. Monomer. Mg(2+) serves as cofactor.

The catalysed reaction is adenosine(37) in tRNA + dimethylallyl diphosphate = N(6)-dimethylallyladenosine(37) in tRNA + diphosphate. Catalyzes the transfer of a dimethylallyl group onto the adenine at position 37 in tRNAs that read codons beginning with uridine, leading to the formation of N6-(dimethylallyl)adenosine (i(6)A). The chain is tRNA dimethylallyltransferase from Rhizobium johnstonii (strain DSM 114642 / LMG 32736 / 3841) (Rhizobium leguminosarum bv. viciae).